The following is a 572-amino-acid chain: MTEKIVLPPQSGKPSDVERIKTESNYLRGTLERTMNDPLSSGIPEDDNRLMKFHGSYLQDDRDLRNERQRQKLEPAYQFMVRVRTPGGAATPAQWLVMDEMARKYGNGSLKLTTRQAFQVHGILKWNVKKYMQEINEVLLDSLAACGDVNRNVMCNVNPNQSALHEEVYNWSAKLSEHLLPRTRAYHELWLDGEKVIDSQDDEIEPIYGAQYLPRKFKIAIAIPPSNDVDVFSQDIGLIAIVEDEKLIGFNVAVGGGMGMTHGDHATYPQLAREIGFITPDKLLETAEKIITIQRDYGNRSVRKNARFKYTIDARGLEWFNEELTRRLGWSIQEARPYTFERTGDEFGWIKGAEGKWHYTLFIQNGRIKDFQDYKLLTGLREIAKVHTGDFRLTPNQNLMISNVTPQKKKKIAAIIEQYKLTDGAHYSALRRNSIACVSLPTCGLAMAEAERYLPSLITKIETIIDETGLNDTEIVIRMSGCPNGCSRAAMAEIGFIGKGPGKYNLYLGASFTGNRLNKIYRENIGEEEILAELRPILVHYAKERLVGEHFGDFVIRAGYVTAVYDGREFHV.

[4Fe-4S] cluster is bound by residues C437, C443, C482, and C486. Position 486 (C486) interacts with siroheme.

It belongs to the nitrite and sulfite reductase 4Fe-4S domain family. As to quaternary structure, alpha(8)-beta(8). The alpha component is a flavoprotein, the beta component is a hemoprotein. The cofactor is siroheme. [4Fe-4S] cluster serves as cofactor.

The enzyme catalyses hydrogen sulfide + 3 NADP(+) + 3 H2O = sulfite + 3 NADPH + 4 H(+). It functions in the pathway sulfur metabolism; hydrogen sulfide biosynthesis; hydrogen sulfide from sulfite (NADPH route): step 1/1. Functionally, component of the sulfite reductase complex that catalyzes the 6-electron reduction of sulfite to sulfide. This is one of several activities required for the biosynthesis of L-cysteine from sulfate. The polypeptide is Sulfite reductase [NADPH] hemoprotein beta-component (Lysinibacillus sphaericus (strain C3-41)).